Reading from the N-terminus, the 471-residue chain is Uronate isomerase (471 aa).

This sequence belongs to the metallo-dependent hydrolases superfamily. Uronate isomerase family.

It carries out the reaction D-glucuronate = D-fructuronate. The enzyme catalyses aldehydo-D-galacturonate = keto-D-tagaturonate. It participates in carbohydrate metabolism; pentose and glucuronate interconversion. The protein is Uronate isomerase of Xanthomonas campestris pv. campestris (strain B100).